The chain runs to 547 residues: Mercuric reductase (547 aa).

An HMA domain is found at 4 to 67 (NSYKIPIQGM…NISAAGYQPG (64 aa)). Positions 15 and 18 each coordinate a metal cation. Positions 97, 117, and 122 each coordinate FAD. A disulfide bond links Cys-123 and Cys-128. 4 residues coordinate FAD: Lys-132, Ala-196, Asp-388, and Val-396. Hg(2+) contacts are provided by Cys-544 and Cys-545.

This sequence belongs to the class-I pyridine nucleotide-disulfide oxidoreductase family. As to quaternary structure, homodimer. It depends on FAD as a cofactor.

The enzyme catalyses Hg + NADP(+) + H(+) = Hg(2+) + NADPH. Functionally, resistance to Hg(2+) in bacteria appears to be governed by a specialized system which includes mercuric reductase. MerA protein is responsible for volatilizing mercury as Hg(0). The chain is Mercuric reductase (merA) from Staphylococcus aureus.